Consider the following 370-residue polypeptide: Propane 2-monooxygenase, reductase component (370 aa).

Basic residues predominate over residues 1-14 (MAPRPLRRHPPLHH). The disordered stretch occupies residues 1–21 (MAPRPLRRHPPLHHSFHESRR). A 2Fe-2S ferredoxin-type domain is found at 28 to 118 (HRINFEPVDI…DCTIELLNFD (91 aa)). Positions 62, 67, 70, and 102 each coordinate [2Fe-2S] cluster. One can recognise an FAD-binding FR-type domain in the interval 128–229 (IQDVRTRVTR…TGPYGSFTIK (102 aa)).

Belongs to the TmoA/XamoA family. As to quaternary structure, the propane 2-monooxygenase multicomponent enzyme system is composed of an electron transfer component and a monooxygenase component interacting with the effector protein PrmD. The electron transfer component is composed of a reductase (PrmB), and the monooxygenase component is formed by a large subunit (PrmA) and a small subunit (PrmC). Requires FAD as cofactor. [2Fe-2S] cluster serves as cofactor.

Reductase component of the propane 2-monooxygenase multicomponent enzyme system which is involved in the degradation of propane via the O2-dependent hydroxylation of propane. Reductase catalyzes the transfer of electrons from NADH or NADPH to monooxygenase. This chain is Propane 2-monooxygenase, reductase component, found in Rhodococcus jostii (strain RHA1).